Here is a 637-residue protein sequence, read N- to C-terminus: Probable polypeptide N-acetylgalactosaminyltransferase 8 (637 aa).

Over 1–6 (MMFWRK) the chain is Cytoplasmic. Residues 7–29 (LPKALFIGLTLAIAVNLLLVFSS) traverse the membrane as a helical; Signal-anchor for type II membrane protein segment. Residues 30-637 (KGTLQNLFTG…VRDWGQTNSQ (608 aa)) are Lumenal-facing. Asn85, Asn107, and Asn160 each carry an N-linked (GlcNAc...) asparagine glycan. 5 disulfide bridges follow: Cys171–Cys404, Cys395–Cys474, Cys509–Cys525, Cys556–Cys571, and Cys599–Cys617. A catalytic subdomain A region spans residues 180-294 (LPSLSVILIF…VGWAEPILAR (115 aa)). Substrate-binding residues include Asp221 and Arg255. Asp278, His280, and His409 together coordinate Mn(2+). The segment at 351–412 (PVKSPSIMGI…PCSRIAHLER (62 aa)) is catalytic subdomain B. Substrate-binding residues include Arg412 and Tyr417. The region spanning 496–634 (GYGRMKNLLD…QHTVRDWGQT (139 aa)) is the Ricin B-type lectin domain.

Belongs to the glycosyltransferase 2 family. GalNAc-T subfamily. Requires Mn(2+) as cofactor. In terms of tissue distribution, widely expressed. Expressed in heart, skeletal muscle, kidney, liver, small intestine and placenta. Weakly expressed in colon, thymus, spleen, lung and leukocyte.

It localises to the golgi apparatus membrane. The catalysed reaction is L-seryl-[protein] + UDP-N-acetyl-alpha-D-galactosamine = a 3-O-[N-acetyl-alpha-D-galactosaminyl]-L-seryl-[protein] + UDP + H(+). The enzyme catalyses L-threonyl-[protein] + UDP-N-acetyl-alpha-D-galactosamine = a 3-O-[N-acetyl-alpha-D-galactosaminyl]-L-threonyl-[protein] + UDP + H(+). Its pathway is protein modification; protein glycosylation. Probably catalyzes the initial reaction in O-linked oligosaccharide biosynthesis, the transfer of an N-acetyl-D-galactosamine residue to a serine or threonine residue on the protein receptor. In Homo sapiens (Human), this protein is Probable polypeptide N-acetylgalactosaminyltransferase 8 (GALNT8).